The following is a 153-amino-acid chain: MAL-like protein (153 aa).

4 helical membrane passes run leucine 22 to tryptophan 42, valine 59 to phenylalanine 79, glycine 97 to serine 117, and alanine 131 to tyrosine 151. An MARVEL domain is found at leucine 22–histidine 153.

Belongs to the MAL family.

Its subcellular location is the membrane. The polypeptide is MAL-like protein (MALL) (Homo sapiens (Human)).